The following is a 174-amino-acid chain: Large ribosomal subunit protein uL18 (174 aa).

It belongs to the universal ribosomal protein uL18 family. Part of the 50S ribosomal subunit. Contacts the 5S and 23S rRNAs.

This is one of the proteins that bind and probably mediate the attachment of the 5S RNA into the large ribosomal subunit, where it forms part of the central protuberance. This Methanosarcina mazei (strain ATCC BAA-159 / DSM 3647 / Goe1 / Go1 / JCM 11833 / OCM 88) (Methanosarcina frisia) protein is Large ribosomal subunit protein uL18.